The chain runs to 893 residues: Protein translocase subunit SecA (893 aa).

ATP-binding positions include Gln87, 105-109 (GEGKT), and Asp512. Basic and acidic residues predominate over residues 840 to 849 (VEEQHRKSEE). The tract at residues 840 to 893 (VEEQHRKSEEVPMDFQHQSASSPSEQAQTPRVGRNEPCPCGSGKKYKQCHGKLA) is disordered. A compositionally biased stretch (polar residues) spans 855-868 (QHQSASSPSEQAQT). Zn(2+)-binding residues include Cys877, Cys879, Cys888, and His889. The span at 883 to 893 (KKYKQCHGKLA) shows a compositional bias: basic residues.

The protein belongs to the SecA family. As to quaternary structure, monomer and homodimer. Part of the essential Sec protein translocation apparatus which comprises SecA, SecYEG and auxiliary proteins SecDF-YajC and YidC. The cofactor is Zn(2+).

The protein resides in the cell inner membrane. The protein localises to the cytoplasm. It carries out the reaction ATP + H2O + cellular proteinSide 1 = ADP + phosphate + cellular proteinSide 2.. Part of the Sec protein translocase complex. Interacts with the SecYEG preprotein conducting channel. Has a central role in coupling the hydrolysis of ATP to the transfer of proteins into and across the cell membrane, serving both as a receptor for the preprotein-SecB complex and as an ATP-driven molecular motor driving the stepwise translocation of polypeptide chains across the membrane. In Colwellia psychrerythraea (strain 34H / ATCC BAA-681) (Vibrio psychroerythus), this protein is Protein translocase subunit SecA.